The following is a 2049-amino-acid chain: Nonribosomal peptide synthetase tcpP (2049 aa).

Positions 13-395 are adenylation 1; sequence RHHAEAHPEA…LGRKDQLIKN (383 aa). Positions 497–573 constitute a Carrier 1 domain; sequence ATADTKLSAL…EISNHIIEFD (77 aa). Residue Ser-534 is modified to O-(pantetheine 4'-phosphoryl)serine. A condensation 1 region spans residues 605–913; sequence REITMTDVQR…ALGSKMDLLS (309 aa). Residues 1071 to 1452 form an adenylation 2 region; that stretch reads VAAWPMSVAL…GRADHQVKVR (382 aa). The Carrier 2 domain occupies 1550 to 1625; the sequence is DHTELVVSQV…SLAASVKKHL (76 aa). Ser-1585 is subject to O-(pantetheine 4'-phosphoryl)serine. Residues 1662–2044 form a condensation 2 region; the sequence is MHKQASNPSS…FEQEICNLLD (383 aa).

Belongs to the NRP synthetase family.

Its pathway is secondary metabolite biosynthesis. Functionally, nonribosomal peptide synthetase; part of the gene cluster that mediates the biosynthesis of an unusual class of epipolythiodioxopiperazines (ETPs) lacking the reactive thiol group important for toxicity. Firstly, L-tyrosine is prenylated by tcpD, before undergoing condensation with L-glycine in a reaction catalyzed by the NRPS tcpP leading to the diketopiperazine (DKP) backbone. Afterwards the alpha-carbon of tyrosine is oxidized by the cytochrome P450 tcpC to form a hydroxyl group. However, in contrast other ETP biosynthesis pathways studied so far, tcpC is not able to bishydroxylate the DKP at both alpha-carbon positions, but hydroxylates the alpha-carbon of the tyrosine part and the nitrogen of the glycine part. The next steps involve an alpha,beta-elimination reaction catalyzed by tcpI, a methylation by the methyltransferase tcpN the action of the four enzyme cascade tcpG/K/J/I. Due to a dysfunctional cytochrome P450 monooxygenase tcpC, the pathway leads to the biosynthesis of probable non-toxic metabolites lacking the reactive thiol group. The polypeptide is Nonribosomal peptide synthetase tcpP (Claviceps purpurea (strain 20.1) (Ergot fungus)).